Reading from the N-terminus, the 399-residue chain is Cell division protein FtsZ (399 aa).

Residues 30–34 (GGGSN), 117–119 (GTG), Glu148, Lys152, and Asp196 each bind GTP. Residues 349 to 368 (TLMSGNQNAPSGSYEQQDSS) form a disordered region. The span at 351–368 (MSGNQNAPSGSYEQQDSS) shows a compositional bias: polar residues.

Belongs to the FtsZ family. Homodimer. Polymerizes to form a dynamic ring structure in a strictly GTP-dependent manner. Interacts directly with several other division proteins.

Its subcellular location is the cytoplasm. Its function is as follows. Essential cell division protein that forms a contractile ring structure (Z ring) at the future cell division site. The regulation of the ring assembly controls the timing and the location of cell division. One of the functions of the FtsZ ring is to recruit other cell division proteins to the septum to produce a new cell wall between the dividing cells. Binds GTP and shows GTPase activity. This is Cell division protein FtsZ from Borreliella burgdorferi (strain ATCC 35210 / DSM 4680 / CIP 102532 / B31) (Borrelia burgdorferi).